Reading from the N-terminus, the 1362-residue chain is DNA-directed RNA polymerase subunit beta (1362 aa).

The protein belongs to the RNA polymerase beta chain family. As to quaternary structure, the RNAP catalytic core consists of 2 alpha, 1 beta, 1 beta' and 1 omega subunit. When a sigma factor is associated with the core the holoenzyme is formed, which can initiate transcription.

It catalyses the reaction RNA(n) + a ribonucleoside 5'-triphosphate = RNA(n+1) + diphosphate. Functionally, DNA-dependent RNA polymerase catalyzes the transcription of DNA into RNA using the four ribonucleoside triphosphates as substrates. The protein is DNA-directed RNA polymerase subunit beta of Parvibaculum lavamentivorans (strain DS-1 / DSM 13023 / NCIMB 13966).